The following is an 817-amino-acid chain: MAQPKIPEYKANGTTDKLPETVPIMPLSDGVLFPKMIIPVVITQNEYMTLIDEVMSGNRLVALITPKSGERKSDYGPGDLSPIGTLALILKMAKPDESRIHLMLQGISRIRTKNFIKTDPYLEAAFAQITENEKKDKETEGLMSNISNVYQELVRISPAIPNELGAMAVTIDEPGSLADMVASTINSSTEEKQNILETLDVKLRLKKVTRQLNHQLEILKLGDKIQSQIKEDMDKQQKEFYLRKQLKAIREELGEKEEGNVEAEEYRTKIEEGNLPEEAYKAATRELERFSRMHPSSSEYTVSSTYLDWLTTLPWDKQTEDHLDIKKARAILDKDHFGLEKPKKRILEYLAVRKLNPDSKGPILCFLGPPGTGKTSLGRSIARALGREFIRISLGGVRDEAEIRGHRRTYVGALPGRIIQEIRKAGTNNPVFMLDEIDKVGADFKGDPSSALLEVLDPEQNFSFADHYLDVSFDLSRVMFVATANVIDTIPPALRDRMEVIGLRGYTLEEKVKIARQYLIPRQRKENGLAAKHISFSQSAIRHIISDYTREAGLRNAEREIASVCRGVAAKIAEGKKVSGAIKPEDLYEYLGPVRFTSETGENALTPGVVMGLAWTPVGGEILFIEATSMKGKRGLTLTGQLGDVMKESATAALSFIRAHARDYDIDEDFFDKYDFHIHVPSGAIPKDGPSAGVTMLTALVSLLTGRKVKKGLAMTGEITLRGKVMPVGGIKEKVIAAHRAGIKEVILPRPNKKDLEEIPAKVKSAMKFHFAEKMGDVLELALNGNGATKKKKKTPAKSKKSTKPAAKKTAARKSRK.

A Lon N-terminal domain is found at 22 to 216 (VPIMPLSDGV…KVTRQLNHQL (195 aa)). An ATP-binding site is contributed by 368-375 (GPPGTGKT). Residues 604 to 785 (ALTPGVVMGL…GDVLELALNG (182 aa)) form the Lon proteolytic domain. Catalysis depends on residues S691 and K734. The tract at residues 784-817 (NGNGATKKKKKTPAKSKKSTKPAAKKTAARKSRK) is disordered. The segment covering 789-817 (TKKKKKTPAKSKKSTKPAAKKTAARKSRK) has biased composition (basic residues).

The protein belongs to the peptidase S16 family. In terms of assembly, homohexamer. Organized in a ring with a central cavity.

It is found in the cytoplasm. It catalyses the reaction Hydrolysis of proteins in presence of ATP.. ATP-dependent serine protease that mediates the selective degradation of mutant and abnormal proteins as well as certain short-lived regulatory proteins. Required for cellular homeostasis and for survival from DNA damage and developmental changes induced by stress. Degrades polypeptides processively to yield small peptide fragments that are 5 to 10 amino acids long. Binds to DNA in a double-stranded, site-specific manner. The protein is Lon protease of Desulfosudis oleivorans (strain DSM 6200 / JCM 39069 / Hxd3) (Desulfococcus oleovorans).